The sequence spans 416 residues: Peptide chain release factor subunit 1 (416 aa).

Belongs to the eukaryotic release factor 1 family. Heterodimer of two subunits, one of which binds GTP.

It localises to the cytoplasm. Functionally, directs the termination of nascent peptide synthesis (translation) in response to the termination codons UAA, UAG and UGA. This chain is Peptide chain release factor subunit 1, found in Haloquadratum walsbyi (strain DSM 16790 / HBSQ001).